Reading from the N-terminus, the 277-residue chain is 3-methyl-2-oxobutanoate hydroxymethyltransferase (277 aa).

Residues D49 and D88 each coordinate Mg(2+). 3-methyl-2-oxobutanoate is bound by residues 49-50 (DS), D88, and K118. E120 provides a ligand contact to Mg(2+). Catalysis depends on E186, which acts as the Proton acceptor.

It belongs to the PanB family. Homodecamer; pentamer of dimers. It depends on Mg(2+) as a cofactor.

Its subcellular location is the cytoplasm. The enzyme catalyses 3-methyl-2-oxobutanoate + (6R)-5,10-methylene-5,6,7,8-tetrahydrofolate + H2O = 2-dehydropantoate + (6S)-5,6,7,8-tetrahydrofolate. It functions in the pathway cofactor biosynthesis; (R)-pantothenate biosynthesis; (R)-pantoate from 3-methyl-2-oxobutanoate: step 1/2. In terms of biological role, catalyzes the reversible reaction in which hydroxymethyl group from 5,10-methylenetetrahydrofolate is transferred onto alpha-ketoisovalerate to form ketopantoate. This chain is 3-methyl-2-oxobutanoate hydroxymethyltransferase, found in Cereibacter sphaeroides (strain ATCC 17025 / ATH 2.4.3) (Rhodobacter sphaeroides).